The sequence spans 191 residues: uncharacterized protein (191 aa).

Residues 3–63 enclose the HTH tetR-type domain; sequence IDRKKLILEA…EIFTTLLKEM (61 aa). Positions 26 to 45 form a DNA-binding region, H-T-H motif; that stretch reads TMDLVAKLANVGKGTIYTFF.

This is an uncharacterized protein from Bacillus subtilis (strain 168).